Reading from the N-terminus, the 497-residue chain is Carboxylesterase (497 aa).

Ser185 (acyl-ester intermediate) is an active-site residue. Active-site charge relay system residues include Glu319 and His415.

Belongs to the type-B carboxylesterase/lipase family.

It is found in the secreted. It carries out the reaction a carboxylic ester + H2O = an alcohol + a carboxylate + H(+). The protein is Carboxylesterase of Thermobifida fusca (Thermomonospora fusca).